Here is a 342-residue protein sequence, read N- to C-terminus: MWFGGGPIDAAGALRGFVREAGGCAVVDGGLGTELEAHGADLHDALWSAKCLASAPHLIRKVHLDYLEAGADVIISASYQATIEGFQSRGFSRDESEELLRRSVHVAQEARRVFAAEGDRSSRRGRPPALVAASVGSYGAYRADGSEYSGDYGKSMTKEDLKNFHRRRLQVLAGAGPDLIAFETIPNKLEAQVYAELLEENGIRIPAWFSFTSKDGVNAASGDPINECAAVADSCPRVDAVGVNCTAPRFIHGLILSIKKVTSKPIVVYPNSGETYVAETNEWVDSDGATGTDDFVSRVGEWRRAGAALIGGCCRTSPATVRAIARAVREAEYDDIPAVAVL.

The Hcy-binding domain maps to 13 to 328 (ALRGFVREAG…ATVRAIARAV (316 aa)). Zn(2+) is bound by residues Cys-245, Cys-313, and Cys-314.

Monomer. Zn(2+) serves as cofactor.

It catalyses the reaction S-methyl-L-methionine + L-homocysteine = 2 L-methionine + H(+). Catalyzes methyl transfer from S-methylmethionine (SMM) to adenosyl-L-homocysteine (AdoMet). SMM degradation (by HMT-1, HMT-2, HMT-3 and HMT-4) and biosynthesis (by MMT1) constitute the SMM cycle in plants, which is probably required to achieve short term control of AdoMet level. The chain is Homocysteine S-methyltransferase 4 (HMT-4) from Zea mays (Maize).